Here is a 260-residue protein sequence, read N- to C-terminus: Multiple myeloma tumor-associated protein 2 homolog (260 aa).

Positions 1–11 (MFGSNRGGVRG) are enriched in gly residues. The interval 1–21 (MFGSNRGGVRGGQDQFNWEDV) is disordered. Glycyl lysine isopeptide (Lys-Gly) (interchain with G-Cter in SUMO2) cross-links involve residues Lys22, Lys104, and Lys113. A compositionally biased stretch (basic and acidic residues) spans 106 to 116 (EGGDPEEKGVD). 2 disordered regions span residues 106–133 (EGGD…RVAL) and 146–260 (SVFT…SSDD). The span at 117–132 (RLLGLGSASGSAGRVA) shows a compositional bias: low complexity. Residues Ser123 and Ser127 each carry the phosphoserine modification. The segment covering 170-182 (RAEDKVEPDAESH) has biased composition (basic and acidic residues). Basic residues predominate over residues 183 to 206 (KKSKKEKKKKKKKHKKHKKKKDKE). Ser215, Ser216, and Ser219 each carry phosphoserine.

This is Multiple myeloma tumor-associated protein 2 homolog (Mmtag2) from Mus musculus (Mouse).